The primary structure comprises 462 residues: Cysteine--tRNA ligase (462 aa).

Cys30 is a Zn(2+) binding site. Residues 32–42 (PTVYDRAHLGN) carry the 'HIGH' region motif. Residues Cys221, His246, and Glu250 each contribute to the Zn(2+) site. The short motif at 279 to 283 (KMSKS) is the 'KMSKS' region element. Lys282 is a binding site for ATP.

It belongs to the class-I aminoacyl-tRNA synthetase family. As to quaternary structure, monomer. Zn(2+) serves as cofactor.

Its subcellular location is the cytoplasm. The catalysed reaction is tRNA(Cys) + L-cysteine + ATP = L-cysteinyl-tRNA(Cys) + AMP + diphosphate. The protein is Cysteine--tRNA ligase of Paracoccus denitrificans (strain Pd 1222).